A 490-amino-acid polypeptide reads, in one-letter code: RNA-binding post-transcriptional regulator cip1 (490 aa).

Disordered stretches follow at residues 16–63 (RGLA…GSSA), 76–97 (ASSRAASPAPSDSFPTFGYSQL), and 138–199 (HNVS…GEDT). Positions 34-62 (RLQSPLNSPKLQPIGSPQASRKTSGSGSS) are enriched in polar residues. Phosphoserine occurs at positions 37, 41, 49, 86, and 141. 2 stretches are compositionally biased toward low complexity: residues 76–88 (ASSRAASPAPSDS) and 141–160 (SPPSGAESSSESKSFSASGK). A compositionally biased stretch (polar residues) spans 164 to 192 (ADTSAEPSLDAFNSTQIKAGSTANSNSTP). Residues 202–280 (TAIVVKNIPF…RRLRVEWKRQ (79 aa)) enclose the RRM domain. 3 positions are modified to phosphoserine: Ser-397, Ser-401, and Ser-427. The residue at position 431 (Thr-431) is a Phosphothreonine. Ser-435, Ser-456, and Ser-466 each carry phosphoserine. The interval 457–490 (PLQKASTLSSPFNSKNDNDASTSASKQSFGVSHF) is disordered.

Interacts with csx1. Phosphorylated by sty1.

Its subcellular location is the cytoplasm. Functionally, regulates global gene expression after oxidative stress. Interacts and stabilizes mRNAs and may regulate their transition between different cytoplasmic components after oxidative stress. This chain is RNA-binding post-transcriptional regulator cip1 (cip1), found in Schizosaccharomyces pombe (strain 972 / ATCC 24843) (Fission yeast).